Reading from the N-terminus, the 249-residue chain is Basic leucine zipper 23 (249 aa).

Positions 66–90 (KVSTDDTSESSGKKRPLGNREAVRK) are disordered. The bZIP domain occupies 74–121 (ESSGKKRPLGNREAVRKYREKKKAKAASLEDEVMRLKAVNNQLLKRLQ). The basic motif stretch occupies residues 78–98 (KKRPLGNREAVRKYREKKKAK). Positions 102 to 116 (LEDEVMRLKAVNNQL) are leucine-zipper.

It is found in the nucleus. Transcription factor involved in the response to zinc ion deficiency. Binds to the consensus sequence 5'-[AG]TGTCGACA[CT]-3' also called zinc deficiency response element (ZDRE). The ZDRE sequence is conserved in the plant kingdom and present in the promoters of genes that constitute the primary response to zinc deficiency, comprising additional ZIP metal transporter genes. Required for zinc accumulation in roots. Mediates the expression of the zinc transporter ZIP12 during growth in zinc-deficient conditions. ZIP12 transporter is involved in zinc uptake in roots. The protein is Basic leucine zipper 23 of Arabidopsis thaliana (Mouse-ear cress).